The following is a 237-amino-acid chain: tRNA (guanine-N(1)-)-methyltransferase (237 aa).

Residues Gly113 and 133 to 138 (VGDFIV) each bind S-adenosyl-L-methionine.

Belongs to the RNA methyltransferase TrmD family. Homodimer.

It localises to the cytoplasm. The catalysed reaction is guanosine(37) in tRNA + S-adenosyl-L-methionine = N(1)-methylguanosine(37) in tRNA + S-adenosyl-L-homocysteine + H(+). Functionally, specifically methylates guanosine-37 in various tRNAs. The polypeptide is tRNA (guanine-N(1)-)-methyltransferase (Hydrogenovibrio crunogenus (strain DSM 25203 / XCL-2) (Thiomicrospira crunogena)).